The following is a 467-amino-acid chain: Sialic acid-binding Ig-like lectin 12 (467 aa).

Positions 1-18 (MLLLLLLLLLWGIKGVEG) are cleaved as a signal peptide. Over 19–353 (QNPQEVFTLN…ATLSEMMMGT (335 aa)) the chain is Extracellular. The region spanning 21–141 (PQEVFTLNVE…TKYNYMWDKM (121 aa)) is the Ig-like V-type domain. Disulfide bonds link Cys-40-Cys-176, Cys-45-Cys-108, and Cys-170-Cys-219. Asn-46 is a glycosylation site (N-linked (GlcNAc...) asparagine). Arg-126 is an N-acetylneuraminate binding site. 2 Ig-like C2-type domains span residues 152-239 (PQIL…LNVS) and 242-339 (PKNL…LSLS). N-linked (GlcNAc...) asparagine glycans are attached at residues Asn-167, Asn-197, Asn-216, Asn-227, Asn-237, Asn-244, Asn-262, Asn-287, and Asn-294. An intrachain disulfide couples Cys-278 to Cys-323. Residues 354–374 (FVGSGVTALLFLSVCILLLAV) form a helical membrane-spanning segment. Over 375-467 (RSYRRKPARP…IKFPQRTAWP (93 aa)) the chain is Cytoplasmic. An ITIM motif motif is present at residues 430–435 (IHYATL). 2 positions are modified to phosphotyrosine: Tyr-432 and Tyr-455. The SLAM-like motif motif lies at 453 to 458 (TEYSEI).

It belongs to the immunoglobulin superfamily. SIGLEC (sialic acid binding Ig-like lectin) family. Homodimer; disulfide-linked. Interacts with PTPN6/SHP-1 and PTPN11/SHP-2 upon phosphorylation. Post-translationally, phosphorylation of Tyr-432 is required for binding to PTPN6 and PTPN11. Phosphorylation of Tyr-455 is involved in binding to PTPN6. Tyr-432 needs to be phosphorylated prior to Tyr-455. Expressed by monocytic/myeloid lineage cells. Found at higher levels in spleen, liver and heart. Found at lower levels in kidney and lung.

The protein localises to the membrane. Putative adhesion molecule that mediates sialic-acid dependent binding to cells. The sialic acid recognition site may be masked by cis interactions with sialic acids on the same cell surface. In the immune response, may act as an inhibitory receptor upon ligand induced tyrosine phosphorylation by recruiting cytoplasmic phosphatase(s) via their SH2 domain(s) that block signal transduction through dephosphorylation of signaling molecules. The protein is Sialic acid-binding Ig-like lectin 12 (Siglec12) of Mus musculus (Mouse).